A 218-amino-acid polypeptide reads, in one-letter code: Cytochrome b6 (218 aa).

Residues 35–55 (IFYCLGGITLVCFLIQFATGF) traverse the membrane as a helical segment. Cys-38 is a binding site for heme c. His-89 and His-103 together coordinate heme b. Transmembrane regions (helical) follow at residues 93-113 (ASMM…TGGF), 119-139 (LTWV…VTGY), and 189-209 (LHTF…FLMI). Heme b-binding residues include His-190 and His-205.

It belongs to the cytochrome b family. PetB subfamily. The 4 large subunits of the cytochrome b6-f complex are cytochrome b6, subunit IV (17 kDa polypeptide, PetD), cytochrome f and the Rieske protein, while the 4 small subunits are PetG, PetL, PetM and PetN. The complex functions as a dimer. Requires heme b as cofactor. Heme c is required as a cofactor.

It is found in the cellular thylakoid membrane. In terms of biological role, component of the cytochrome b6-f complex, which mediates electron transfer between photosystem II (PSII) and photosystem I (PSI), cyclic electron flow around PSI, and state transitions. In Prochlorococcus marinus (strain MIT 9211), this protein is Cytochrome b6.